A 529-amino-acid chain; its full sequence is Bifunctional purine biosynthesis protein PurH (529 aa).

The region spanning 1–148 (MQQRRPIRRA…KNHKDVAIVV (148 aa)) is the MGS-like domain. Residue Lys-287 is modified to N6-acetyllysine.

It belongs to the PurH family.

The catalysed reaction is (6R)-10-formyltetrahydrofolate + 5-amino-1-(5-phospho-beta-D-ribosyl)imidazole-4-carboxamide = 5-formamido-1-(5-phospho-D-ribosyl)imidazole-4-carboxamide + (6S)-5,6,7,8-tetrahydrofolate. The enzyme catalyses IMP + H2O = 5-formamido-1-(5-phospho-D-ribosyl)imidazole-4-carboxamide. Its pathway is purine metabolism; IMP biosynthesis via de novo pathway; 5-formamido-1-(5-phospho-D-ribosyl)imidazole-4-carboxamide from 5-amino-1-(5-phospho-D-ribosyl)imidazole-4-carboxamide (10-formyl THF route): step 1/1. It functions in the pathway purine metabolism; IMP biosynthesis via de novo pathway; IMP from 5-formamido-1-(5-phospho-D-ribosyl)imidazole-4-carboxamide: step 1/1. This chain is Bifunctional purine biosynthesis protein PurH, found in Escherichia coli O139:H28 (strain E24377A / ETEC).